Reading from the N-terminus, the 402-residue chain is Putative F-box protein At3g20030 (402 aa).

The F-box domain maps to 1-56 (MTMMSDLSQDLLEEILSRVPRTSLGAVRSTCKRWNTLFKDRILCKAEETRDQFRFI).

The protein is Putative F-box protein At3g20030 of Arabidopsis thaliana (Mouse-ear cress).